The chain runs to 405 residues: Arginine biosynthesis bifunctional protein ArgJ, mitochondrial (405 aa).

The substrate site is built by T174, K200, T211, and E300. The Nucleophile role is filled by T211.

The protein belongs to the ArgJ family. As to quaternary structure, heterodimer of an alpha and a beta chain. The alpha and beta chains are autoproteolytically processed from a single precursor protein within the mitochondrion.

It localises to the mitochondrion matrix. It catalyses the reaction N(2)-acetyl-L-ornithine + L-glutamate = N-acetyl-L-glutamate + L-ornithine. The enzyme catalyses L-glutamate + acetyl-CoA = N-acetyl-L-glutamate + CoA + H(+). It functions in the pathway amino-acid biosynthesis; L-arginine biosynthesis; L-ornithine and N-acetyl-L-glutamate from L-glutamate and N(2)-acetyl-L-ornithine (cyclic): step 1/1. The protein operates within amino-acid biosynthesis; L-arginine biosynthesis; N(2)-acetyl-L-ornithine from L-glutamate: step 1/4. In terms of biological role, catalyzes two activities which are involved in the cyclic version of arginine biosynthesis: the synthesis of acetylglutamate from glutamate and acetyl-CoA, and of ornithine by transacetylation between acetylornithine and glutamate. The chain is Arginine biosynthesis bifunctional protein ArgJ, mitochondrial from Candida tropicalis (strain ATCC MYA-3404 / T1) (Yeast).